The chain runs to 327 residues: Zinc transport protein ZntB (327 aa).

At 1–273 (MEAIKGSDVN…ARRTYTMSLM (273 aa)) the chain is on the cytoplasmic side. A helical membrane pass occupies residues 274–294 (AMVFLPSTFLTGLFGVNLGGI). Over 295–300 (PGGGWR) the chain is Periplasmic. The chain crosses the membrane as a helical span at residues 301 to 321 (FGFSLFCILLVVLIGGVTLWL). Topologically, residues 322-327 (HRSKWL) are cytoplasmic.

Belongs to the CorA metal ion transporter (MIT) (TC 1.A.35) family.

The protein resides in the cell inner membrane. The catalysed reaction is Zn(2+)(out) + H(+)(out) = Zn(2+)(in) + H(+)(in). Its function is as follows. Zinc transporter. Acts as a Zn(2+):proton symporter, which likely mediates zinc ion uptake. In Salmonella agona (strain SL483), this protein is Zinc transport protein ZntB.